We begin with the raw amino-acid sequence, 37 residues long: Photosystem II reaction center protein T (37 aa).

The helical transmembrane segment at 3–23 threads the bilayer; sequence ALVYTFLLVSTLGILFFAIFF.

The protein belongs to the PsbT family. As to quaternary structure, PSII is composed of 1 copy each of membrane proteins PsbA, PsbB, PsbC, PsbD, PsbE, PsbF, PsbH, PsbI, PsbJ, PsbK, PsbL, PsbM, PsbT, PsbY, PsbZ, Psb30/Ycf12, at least 3 peripheral proteins of the oxygen-evolving complex and a large number of cofactors. It forms dimeric complexes.

It localises to the plastid. The protein localises to the chloroplast thylakoid membrane. Functionally, found at the monomer-monomer interface of the photosystem II (PS II) dimer, plays a role in assembly and dimerization of PSII. PSII is a light-driven water plastoquinone oxidoreductase, using light energy to abstract electrons from H(2)O, generating a proton gradient subsequently used for ATP formation. The chain is Photosystem II reaction center protein T from Ephedra sinica (Chinese ephedra).